Here is a 263-residue protein sequence, read N- to C-terminus: Putative cysteine-rich repeat secretory protein 31 (263 aa).

Positions 1-32 are cleaved as a signal peptide; it reads MHNSYSLSKRLVLVLFLAVVATQLFLIRNVSS. 2 Gnk2-homologous domains span residues 39–141 and 146–260; these read YLHH…AIEV and YDNN…FYPF.

Belongs to the cysteine-rich repeat secretory protein family.

The protein localises to the secreted. This Arabidopsis thaliana (Mouse-ear cress) protein is Putative cysteine-rich repeat secretory protein 31 (CRRSP31).